Here is a 418-residue protein sequence, read N- to C-terminus: Serine hydroxymethyltransferase (418 aa).

(6S)-5,6,7,8-tetrahydrofolate-binding positions include Leu-121 and 125–127 (GHL). The residue at position 230 (Lys-230) is an N6-(pyridoxal phosphate)lysine. 355–357 (SPF) contacts (6S)-5,6,7,8-tetrahydrofolate.

The protein belongs to the SHMT family. Homodimer. Pyridoxal 5'-phosphate serves as cofactor.

It localises to the cytoplasm. It catalyses the reaction (6R)-5,10-methylene-5,6,7,8-tetrahydrofolate + glycine + H2O = (6S)-5,6,7,8-tetrahydrofolate + L-serine. It functions in the pathway one-carbon metabolism; tetrahydrofolate interconversion. Its pathway is amino-acid biosynthesis; glycine biosynthesis; glycine from L-serine: step 1/1. In terms of biological role, catalyzes the reversible interconversion of serine and glycine with tetrahydrofolate (THF) serving as the one-carbon carrier. This reaction serves as the major source of one-carbon groups required for the biosynthesis of purines, thymidylate, methionine, and other important biomolecules. Also exhibits THF-independent aldolase activity toward beta-hydroxyamino acids, producing glycine and aldehydes, via a retro-aldol mechanism. This chain is Serine hydroxymethyltransferase, found in Streptococcus pyogenes serotype M1.